We begin with the raw amino-acid sequence, 328 residues long: 3-dehydroquinate synthase (328 aa).

This sequence belongs to the archaeal-type DHQ synthase family.

The enzyme catalyses 2-amino-2,3,7-trideoxy-D-lyxo-hept-6-ulosonate + NAD(+) + H2O = 3-dehydroquinate + NH4(+) + NADH + H(+). In terms of biological role, catalyzes the oxidative deamination and cyclization of 2-amino-3,7-dideoxy-D-threo-hept-6-ulosonic acid (ADH) to yield 3-dehydroquinate (DHQ), which is fed into the canonical shikimic pathway of aromatic amino acid biosynthesis. The sequence is that of 3-dehydroquinate synthase from Methanospirillum hungatei JF-1 (strain ATCC 27890 / DSM 864 / NBRC 100397 / JF-1).